The sequence spans 505 residues: Probable malate:quinone oxidoreductase (505 aa).

The protein belongs to the MQO family. Requires FAD as cofactor.

It carries out the reaction (S)-malate + a quinone = a quinol + oxaloacetate. It participates in carbohydrate metabolism; tricarboxylic acid cycle; oxaloacetate from (S)-malate (quinone route): step 1/1. The protein is Probable malate:quinone oxidoreductase of Pseudomonas fluorescens.